Reading from the N-terminus, the 283-residue chain is Putative cytochrome b-c1 complex subunit Rieske-like protein 1 (283 aa).

Residues 116–149 (TEARKGFSYLVTGVTTVGVAYAAKNAVTQFVSSM) form a helical membrane-spanning segment. In terms of domain architecture, Rieske spans 196 to 281 (EAAVELSQLR…YEFTSDDMVI (86 aa)). 4 residues coordinate [2Fe-2S] cluster: cysteine 226, histidine 228, cysteine 245, and histidine 248. Cysteines 231 and 247 form a disulfide.

This sequence belongs to the Rieske iron-sulfur protein family. It depends on [2Fe-2S] cluster as a cofactor.

It is found in the membrane. This is Putative cytochrome b-c1 complex subunit Rieske-like protein 1 (UQCRFS1P1) from Homo sapiens (Human).